The primary structure comprises 239 residues: Putative 3-methyladenine DNA glycosylase (239 aa).

It belongs to the DNA glycosylase MPG family.

The protein is Putative 3-methyladenine DNA glycosylase of Pseudomonas aeruginosa (strain LESB58).